We begin with the raw amino-acid sequence, 155 residues long: E3 ubiquitin-protein ligase RHA2A (155 aa).

The RING-type; atypical zinc finger occupies 86-128; that stretch reads CVVCLSKLKEGEEVRKLECRHVFHKKCLEGWLHQFNFTCPLCR.

In terms of assembly, interacts with NAC019 and NAC055. Expressed in stems, flowers, cauline leaves, rosettes, siliques, seeds and roots.

It is found in the cytoplasm. Its subcellular location is the nucleus. The catalysed reaction is S-ubiquitinyl-[E2 ubiquitin-conjugating enzyme]-L-cysteine + [acceptor protein]-L-lysine = [E2 ubiquitin-conjugating enzyme]-L-cysteine + N(6)-ubiquitinyl-[acceptor protein]-L-lysine.. It participates in protein modification; protein ubiquitination. Functionally, E3 ubiquitin-protein ligase involved in the positive regulation of abscisic acid (ABA) signaling and responses to salt and osmotic stresses during seed germination and early seedling development. Acts additively with RHA2B in regulating ABA signaling and drought response. Possesses E3 ubiquitin ligase activity in vitro. This Arabidopsis thaliana (Mouse-ear cress) protein is E3 ubiquitin-protein ligase RHA2A.